Here is a 936-residue protein sequence, read N- to C-terminus: Phosphoenolpyruvate carboxylase (936 aa).

Residues 1 to 20 form a disordered region; sequence MSSLNLSAGPEPVSERPDDA. Catalysis depends on residues His-164 and Lys-598.

This sequence belongs to the PEPCase type 1 family. Requires Mg(2+) as cofactor.

It carries out the reaction oxaloacetate + phosphate = phosphoenolpyruvate + hydrogencarbonate. Forms oxaloacetate, a four-carbon dicarboxylic acid source for the tricarboxylic acid cycle. This chain is Phosphoenolpyruvate carboxylase (ppc), found in Rhodopseudomonas palustris (strain ATCC BAA-98 / CGA009).